Reading from the N-terminus, the 261-residue chain is Probable septum site-determining protein MinC (261 aa).

The tract at residues 106–145 (RAPAAKPADEAEPAAVPAVETAAAPAAAAAPEQPSEPAPT) is disordered. The span at 118–144 (PAAVPAVETAAAPAAAAAPEQPSEPAP) shows a compositional bias: low complexity.

The protein belongs to the MinC family. As to quaternary structure, interacts with MinD and FtsZ.

Its function is as follows. Cell division inhibitor that blocks the formation of polar Z ring septums. Rapidly oscillates between the poles of the cell to destabilize FtsZ filaments that have formed before they mature into polar Z rings. Prevents FtsZ polymerization. This Burkholderia orbicola (strain AU 1054) protein is Probable septum site-determining protein MinC.